Reading from the N-terminus, the 263-residue chain is uncharacterized protein (263 aa).

It belongs to the A.longa ORF167/ORF288 family.

The protein localises to the plastid. This is an uncharacterized protein from Euglena longa (Euglenophycean alga).